The following is a 537-amino-acid chain: [Pyruvate dehydrogenase [acetyl-transferring]]-phosphatase 1, mitochondrial (537 aa).

Residues 1 to 71 (MPAPTQLFFP…WWHYTQGRRY (71 aa)) constitute a mitochondrion transit peptide. A PPM-type phosphatase domain is found at 109-525 (ILGFDSNQLP…DDITIIVVQF (417 aa)). Residues Asp144 and Gly145 each contribute to the Mn(2+) site. Lys202 carries the post-translational modification N6-acetyllysine. 2 residues coordinate Mn(2+): Asp418 and Asp516.

The protein belongs to the PP2C family. As to quaternary structure, heterodimer of a catalytic (PDP1) and a regulatory (PDPR) subunit. Mn(2+) is required as a cofactor. The cofactor is Mg(2+).

Its subcellular location is the mitochondrion. It catalyses the reaction O-phospho-L-seryl-[pyruvate dehydrogenase E1 alpha subunit] + H2O = L-seryl-[pyruvate dehydrogenase E1 alpha subunit] + phosphate. With respect to regulation, magnesium-dependent and calcium-stimulated. PDP1 activity strongly depends on its Ca(2+)-dependent binding to the lipoyl domain of E2 subunit of component of the pyruvate dehydrogenase complex. Its function is as follows. Mitochondrial enzyme that catalyzes the dephosphorylation and concomitant reactivation of the alpha subunit of the E1 component of the pyruvate dehydrogenase complex (PDC), thereby stimulating the conversion of pyruvate into acetyl-CoA. The polypeptide is [Pyruvate dehydrogenase [acetyl-transferring]]-phosphatase 1, mitochondrial (PDP1) (Pongo abelii (Sumatran orangutan)).